The primary structure comprises 409 residues: Exonuclease V (409 aa).

Cysteine 86 is a [4Fe-4S] cluster binding site. Mg(2+) contacts are provided by aspartate 176 and aspartate 207. [4Fe-4S] cluster-binding residues include cysteine 386, cysteine 389, and cysteine 395.

This sequence belongs to the EXO5 family. Monomer. The cofactor is Mg(2+). It depends on [4Fe-4S] cluster as a cofactor.

It localises to the cytoplasm. The protein localises to the nucleus. The protein resides in the mitochondrion. In terms of biological role, single-stranded DNA (ssDNA) bidirectional exonuclease involved in DNA repair. Probably involved in DNA repair following ultraviolet (UV) irradiation and interstrand cross-links (ICLs) damage. Has both 5'-3' and 3'-5' exonuclease activities with a strong preference for 5'-ends. Acts as a sliding exonuclease that loads at ssDNA ends and then slides along the ssDNA prior to cutting; however the sliding and the 3'-5' exonuclease activities are abolished upon binding to the replication protein A (RPA) complex that enforces 5'-directionality activity. Functionally, plays a redundant role with the flap endonuclease FEN1/rad2 for the maintenance of mitochondrial DNA. The chain is Exonuclease V (exo5) from Schizosaccharomyces pombe (strain 972 / ATCC 24843) (Fission yeast).